A 33-amino-acid chain; its full sequence is Phospholipase A2 homolog BmarPLA2 (33 aa).

Belongs to the phospholipase A2 family. Group II subfamily. K49 sub-subfamily. In terms of assembly, homodimer; non-covalently linked. As to expression, expressed by the venom gland.

The protein localises to the secreted. Functionally, snake phospholipase A2 homolog that lacks enzymatic activity. May display myotoxin activity. In isolated heart decreases cardiac frequency. Also decreases mean arterial pressure. Does not show antimicrobial activity. Does not change renal parameters (such as perfusion pressure, renal vascular resistance, urinary flow, glomerular filtration rate and sodium tubular transport). In Bothrops marajoensis (Marajo lancehead), this protein is Phospholipase A2 homolog BmarPLA2.